Here is a 106-residue protein sequence, read N- to C-terminus: 3-phenylpropionate/cinnamic acid dioxygenase ferredoxin subunit (106 aa).

In terms of domain architecture, Rieske spans 4–99; that stretch reads IYACPVADVP…VHVEGGDIFI (96 aa). Positions 42, 44, 62, and 65 each coordinate [2Fe-2S] cluster.

Belongs to the bacterial ring-hydroxylating dioxygenase ferredoxin component family. As to quaternary structure, this dioxygenase system consists of four proteins: the two subunits of the hydroxylase component (HcaE and HcaF), a ferredoxin (HcaC) and a ferredoxin reductase (HcaD). [2Fe-2S] cluster is required as a cofactor.

It participates in aromatic compound metabolism; 3-phenylpropanoate degradation. Its function is as follows. Part of the multicomponent 3-phenylpropionate dioxygenase, that converts 3-phenylpropionic acid (PP) and cinnamic acid (CI) into 3-phenylpropionate-dihydrodiol (PP-dihydrodiol) and cinnamic acid-dihydrodiol (CI-dihydrodiol), respectively. This protein seems to be a 2Fe-2S ferredoxin. This chain is 3-phenylpropionate/cinnamic acid dioxygenase ferredoxin subunit, found in Escherichia coli O139:H28 (strain E24377A / ETEC).